We begin with the raw amino-acid sequence, 248 residues long: Phosphatidylglycerol--prolipoprotein diacylglyceryl transferase (248 aa).

Transmembrane regions (helical) follow at residues 6–26, 48–68, and 84–104; these read FSIFGIDIMWYGILITLGVIL, ILVWALPLAIVGARAYYVIFE, and GGGLAIYGGIIAAVITCYVIC. Arg130 lines the a 1,2-diacyl-sn-glycero-3-phospho-(1'-sn-glycerol) pocket. The next 2 membrane-spanning stretches (helical) occupy residues 187-207 and 214-234; these read GQITSMYMILYGILRFFVEGL and IGALRVSQLVSIAIIIAGVIL.

It belongs to the Lgt family.

The protein resides in the cell membrane. The catalysed reaction is L-cysteinyl-[prolipoprotein] + a 1,2-diacyl-sn-glycero-3-phospho-(1'-sn-glycerol) = an S-1,2-diacyl-sn-glyceryl-L-cysteinyl-[prolipoprotein] + sn-glycerol 1-phosphate + H(+). It functions in the pathway protein modification; lipoprotein biosynthesis (diacylglyceryl transfer). Functionally, catalyzes the transfer of the diacylglyceryl group from phosphatidylglycerol to the sulfhydryl group of the N-terminal cysteine of a prolipoprotein, the first step in the formation of mature lipoproteins. This chain is Phosphatidylglycerol--prolipoprotein diacylglyceryl transferase, found in Finegoldia magna (strain ATCC 29328 / DSM 20472 / WAL 2508) (Peptostreptococcus magnus).